The following is a 1420-amino-acid chain: MKALLDLFKQTQGDEQFDVIKIGLASPEKIRSWSFGEVRKPEAINYRTFKPERDGLFCAKIFGPTKDYECLCGKYKRLKFRGIICEKCGVEVTLAKVRRERMGHIELAAPVAHIWFLKSLPSRLGMVLDMTLRDIERVLYFEAYVVVDPGMTPEGAMKRGQIMSEDEYIAKTEEYGDGVFTAIMGAEGIRDLLRSIDIDREVETIRADLKATGSDAKIKKYAKRLKVLEAFQTSGIKPDWMIMEVLPVLPPELRPLVPLDGGRFATSDLNDLYRRVINRNNRLKRLLELRAPEIIVRNEKRMLQEAVDSLLDNGRRGKAMTGANKRPLKSLAEMIKGKSGRFRQNLLGKRVDYSGRSVIVVGPTLKLHQCGLPKLMALELFKPFIFNKLETLGIATTIKAAKKEVESQTPIVWDILEEVIREHPIMLNRAPTLHRLGIQAFEPMLIEGKAIQLHPLVCAAFNADFDGDQMAVHVPLSLEAQMEARTLMLASNNVLFPANGEPSIVPSQDVVLGLYYATRDKINGKGEGMVFANITEVVRAYEAGQVELASRVAVRITEYEIVDKKAEGDARFAGKTKIYQTSVGRAILSEILPKGMSFEEINKPLKKKEISRLINTSFRKCGLRETVIFADRLLQSGFRLATNAGISVAIDDMLIPTSKERIITEASTKVKEYDKQFMSGLVTNQERYNNVVDIWGAAGDQVGKAMMDELSHVDVLDRNGKTVRQESFNSIYMMADSGARGSAAQIRQLAGMRGLMAKPDGSIIETPITANFREGLNVLQYFISTHGARKGLADTALKTANSGYLTRRLCDVTQDLVVIEEDCGATTGVTMKALVEGGEIIEALRDRILGRVCIGDIVHPDTQEVIVPNDTLLDEDHVDQIVALGIDEVKVRTVLSCLTRFGLCAKCYGRDLGRGGLVNVGEAVGVIAAQSIGEPGTQLTMRTFHIGGAASRALVASNIEAKSNGALKFSGTMRVVKNSRGEQIVISRSGEALIVDENGRERERHKVPYGATLLLKEDAAVKAGASLATWDPLTRPIISEYAGIARFDNVEEGVTVAKQVDEITGLSTLVVIDGKRRSAASKGVRPVINLIDDKGNDVMIAGTDHPVNIGLQVGALITVKDGQKVEVGEVLARIPIESQKTRDITGGLPRVAELFEARSPKDAAVLAKVTGTVSFGKETKGKQRLVITDMDGEANEFLIPKEKQVLVHDGQVVNKGEMIVEGPADPHDILTLKGIEELAIYIVDEVQDVYRLQGVKINDKHIEVIVRQMLRRVQVTDPGDTSFITGEQVERSKLYDENDRVIAEGKHPAQFDNVLLGITKASLSTDSFISAASFQETTRVLTEAAIMGKTDTLRGLKENVIIGRLIPAGTGLSYRRARKVREQFERDRAQMIAAEEEAMANMPVEIEAEVVALTGEADPS.

4 residues coordinate Zn(2+): cysteine 70, cysteine 72, cysteine 85, and cysteine 88. The Mg(2+) site is built by aspartate 464, aspartate 466, and aspartate 468. Residues cysteine 823, cysteine 897, cysteine 904, and cysteine 907 each contribute to the Zn(2+) site.

Belongs to the RNA polymerase beta' chain family. The RNAP catalytic core consists of 2 alpha, 1 beta, 1 beta' and 1 omega subunit. When a sigma factor is associated with the core the holoenzyme is formed, which can initiate transcription. Mg(2+) serves as cofactor. Zn(2+) is required as a cofactor.

It catalyses the reaction RNA(n) + a ribonucleoside 5'-triphosphate = RNA(n+1) + diphosphate. DNA-dependent RNA polymerase catalyzes the transcription of DNA into RNA using the four ribonucleoside triphosphates as substrates. This is DNA-directed RNA polymerase subunit beta' from Polynucleobacter necessarius subsp. necessarius (strain STIR1).